Reading from the N-terminus, the 151-residue chain is Ubiquitin-conjugating enzyme E2-17 kDa (151 aa).

The UBC core domain occupies 4-150; that stretch reads PARRRLMRDF…VKACVEQSFI (147 aa). Residue Cys88 is the Glycyl thioester intermediate of the active site.

This sequence belongs to the ubiquitin-conjugating enzyme family.

It is found in the nucleus. The catalysed reaction is S-ubiquitinyl-[E1 ubiquitin-activating enzyme]-L-cysteine + [E2 ubiquitin-conjugating enzyme]-L-cysteine = [E1 ubiquitin-activating enzyme]-L-cysteine + S-ubiquitinyl-[E2 ubiquitin-conjugating enzyme]-L-cysteine.. The protein operates within protein modification; protein ubiquitination. In terms of biological role, E2 ubiquitin-conjugating enzyme that accepts ubiquitin from the ubiquitin-activating enzyme E1 and transfers it to a E3 ubiquitin-protein ligase. Required for postreplication repair of UV-damaged DNA. Involved in the negative regulation of the Ras/MAPK signaling pathway in the wing by acting with the putative E3 ligases poe, Kcmf1 and Ufd4 to mediate the ubiquitination and proteasomal degradation of rl/MAPK. Required for in mitophagy. The polypeptide is Ubiquitin-conjugating enzyme E2-17 kDa (Drosophila melanogaster (Fruit fly)).